The primary structure comprises 168 residues: Small ribosomal subunit protein uS9 (168 aa).

Residues 1–15 (MAQNEETTEAVEAEE) are compositionally biased toward acidic residues. Residues 1 to 34 (MAQNEETTEAVEAEETLTSYTSESGAAEAAAPKK) are disordered.

Belongs to the universal ribosomal protein uS9 family.

The sequence is that of Small ribosomal subunit protein uS9 from Arthrobacter sp. (strain FB24).